The following is a 234-amino-acid chain: Orotidine 5'-phosphate decarboxylase (234 aa).

Substrate is bound by residues Asp-17, Lys-38, 65 to 74, Thr-122, Arg-184, Gln-193, Gly-213, and Arg-214; that span reads DLKLHDIPNT. The active-site Proton donor is the Lys-67.

Belongs to the OMP decarboxylase family. Type 1 subfamily. Homodimer.

It carries out the reaction orotidine 5'-phosphate + H(+) = UMP + CO2. The protein operates within pyrimidine metabolism; UMP biosynthesis via de novo pathway; UMP from orotate: step 2/2. Functionally, catalyzes the decarboxylation of orotidine 5'-monophosphate (OMP) to uridine 5'-monophosphate (UMP). In Thermosynechococcus vestitus (strain NIES-2133 / IAM M-273 / BP-1), this protein is Orotidine 5'-phosphate decarboxylase.